Reading from the N-terminus, the 526-residue chain is Rho guanine nucleotide exchange factor 3 (526 aa).

The tract at residues 20 to 40 (ELPPASGPAKDAEEPSNKRVK) is disordered. Ser-47 and Ser-70 each carry phosphoserine. A DH domain is found at 122–304 (KRQEAIFELS…QGIVAEINTK (183 aa)). The PH domain occupies 291 to 449 (INIIQGIVAE…WLNCIRQAKE (159 aa)). Disordered regions lie at residues 464 to 502 (EGSF…TSEV) and 507 to 526 (EHME…ESNV). The span at 466 to 475 (SFLNPTTGSR) shows a compositional bias: polar residues.

In terms of assembly, interacts with RHOA and RHOB.

The protein resides in the cytoplasm. Acts as a guanine nucleotide exchange factor (GEF) for RhoA and RhoB GTPases. The sequence is that of Rho guanine nucleotide exchange factor 3 (ARHGEF3) from Macaca fascicularis (Crab-eating macaque).